The following is a 247-amino-acid chain: Uridylate kinase (247 aa).

Position 18 to 21 (18 to 21 (KLSG)) interacts with ATP. Residue G60 participates in UMP binding. Residues G61 and R65 each coordinate ATP. Residues D80 and 141-148 (TGNPFFTT) each bind UMP. 3 residues coordinate ATP: T168, Y174, and D177.

The protein belongs to the UMP kinase family. In terms of assembly, homohexamer.

Its subcellular location is the cytoplasm. It carries out the reaction UMP + ATP = UDP + ADP. The protein operates within pyrimidine metabolism; CTP biosynthesis via de novo pathway; UDP from UMP (UMPK route): step 1/1. Inhibited by UTP. Functionally, catalyzes the reversible phosphorylation of UMP to UDP. The chain is Uridylate kinase from Pseudomonas savastanoi pv. phaseolicola (strain 1448A / Race 6) (Pseudomonas syringae pv. phaseolicola (strain 1448A / Race 6)).